The primary structure comprises 339 residues: MHIGTTLSQFIIEETRLYPGASGDFAGLLNDLTTSCKFIGAQVYRGALVGALGSAGTDNVQGEVQKKLDIISNEAILKSMDWTGHLAGMASEEMDDPYPIPRNIPRGKYLLLFDPLDGSSNTDVGISVGTIFSILKAPVAGRDAELADFLQPGVEQVCAGYALYGSSNMLVYSTGYGVNGFTLDPSIGEYILTHNQMRIPEDTSEYAINMSNHRHWQKPVQRYIDELNQGTDGPRQRDFNMRWVGSMVADVHRILCRGGIFLYPFDQRDPKKPGKLRLLYEANPMSYLVEQAGGAASTGTTRILDIVPQGLHQRIPVILGAKNEVERVVAYHQGSFVIP.

Mg(2+)-binding residues include Glu-92, Asp-114, Leu-116, and Asp-117. Residues 117–120, Asn-209, and Lys-275 contribute to the substrate site; that span reads DGSS. Position 281 (Glu-281) interacts with Mg(2+).

It belongs to the FBPase class 1 family. Homotetramer. The cofactor is Mg(2+).

It is found in the cytoplasm. It carries out the reaction beta-D-fructose 1,6-bisphosphate + H2O = beta-D-fructose 6-phosphate + phosphate. Its pathway is carbohydrate biosynthesis; gluconeogenesis. This Acidithiobacillus ferrooxidans (strain ATCC 53993 / BNL-5-31) (Leptospirillum ferrooxidans (ATCC 53993)) protein is Fructose-1,6-bisphosphatase class 1.